An 811-amino-acid polypeptide reads, in one-letter code: Zinc finger CCCH domain-containing protein 11A (811 aa).

C3H1-type zinc fingers lie at residues 2 to 30 (PNQGEDCYFFFFYSTCTKGDSCPFRHCEA), 32 to 58 (LGNETVCTLWQEGRCFRQVCRFRHMEI), and 61 to 87 (KRSEIPCYWENQPTGCQKLNCAFHHNR). Ser109 carries the post-translational modification Phosphoserine. Residues Lys115 and Lys125 each participate in a glycyl lysine isopeptide (Lys-Gly) (interchain with G-Cter in SUMO2) cross-link. Position 133 is a phosphoserine (Ser133). 4 disordered regions span residues 140 to 195 (MKVE…GLRV), 224 to 258 (KKMKEKSKKQGEGSSGVSSLLLHPEPVPGPEKENV), 286 to 352 (GKRK…EKVN), and 368 to 434 (ERAS…TCIK). Lys141 participates in a covalent cross-link: Glycyl lysine isopeptide (Lys-Gly) (interchain with G-Cter in SUMO2). Phosphoserine occurs at positions 150 and 172. The segment covering 161 to 176 (ADDDEDDDDQFSEEGD) has biased composition (acidic residues). At Ser291 the chain carries Phosphoserine. 2 stretches are compositionally biased toward basic and acidic residues: residues 310-323 (KKVEAPEANIDKTP) and 368-391 (ERASQKRGELQTKLKTEGPSKTDD). Position 322 is a phosphothreonine (Thr322). The stretch at 363–424 (EEILLERASQ…KHRQQEAERQ (62 aa)) forms a coiled coil. Ser371 carries the post-translational modification Phosphoserine. The span at 392-403 (STSGARSSSTIR) shows a compositional bias: polar residues. Residues 418–434 (QQEAERQKSKKDTTCIK) show a composition bias toward basic and acidic residues. Residue Lys479 forms a Glycyl lysine isopeptide (Lys-Gly) (interchain with G-Cter in SUMO2) linkage. The disordered stretch occupies residues 483-550 (ALRVQQSSES…KEASGETTGV (68 aa)). Over residues 487–499 (QQSSESSTSSPSQ) the composition is skewed to low complexity. Lys620 participates in a covalent cross-link: Glycyl lysine isopeptide (Lys-Gly) (interchain with G-Cter in SUMO2). The interval 716–769 (TVPEAENPRDSLVLPPTQSSSDSSPPEVSGPSSSQMSMKTRRLSSASTGKPQLS) is disordered. A compositionally biased stretch (low complexity) spans 730-749 (PPTQSSSDSSPPEVSGPSSS). Positions 750 to 766 (QMSMKTRRLSSASTGKP) are enriched in polar residues.

In terms of assembly, interacts with TREX complex components THOC2, DDX39 and POLDIP3; the interactions are ATP-dependent. Interacts with PABPN1; this interaction retains ZC3H11A in nuclear speckles. Interacts with KPNA3.

The protein resides in the nucleus speckle. In terms of biological role, through its association with TREX complex components, may participate in the export and post-transcriptional coordination of selected mRNA transcripts, including those required to maintain the metabolic processes in embryonic cells. Binds RNA. The polypeptide is Zinc finger CCCH domain-containing protein 11A (ZC3H11A) (Pongo abelii (Sumatran orangutan)).